The following is a 446-amino-acid chain: uncharacterized protein (446 aa).

The disordered stretch occupies residues 141–282 (TEAETNGTRP…GPKPKVKRVS (142 aa)). Positions 159-170 (NSGSKPKAGTQS) are enriched in polar residues. Residues 194–210 (IKSERRSISQGGEKDKA) are compositionally biased toward basic and acidic residues. Phosphoserine occurs at positions 200, 202, 212, and 214. 2 stretches are compositionally biased toward low complexity: residues 211 to 221 (SSSSPSSSQQS) and 229 to 239 (SPSQQNSRSSS). Ser251 carries the phosphoserine modification. Positions 269–280 (GKSRGPKPKVKR) are enriched in basic residues. 2 positions are modified to phosphoserine: Ser282 and Ser307.

This is an uncharacterized protein from Drosophila melanogaster (Fruit fly).